Reading from the N-terminus, the 137-residue chain is Endoribonuclease YbeY (137 aa).

H105, H109, and D115 together coordinate Zn(2+).

This sequence belongs to the endoribonuclease YbeY family. Zn(2+) is required as a cofactor.

Its subcellular location is the cytoplasm. Functionally, single strand-specific metallo-endoribonuclease involved in late-stage 70S ribosome quality control and in maturation of the 3' terminus of the 16S rRNA. The chain is Endoribonuclease YbeY from Chlorobaculum tepidum (strain ATCC 49652 / DSM 12025 / NBRC 103806 / TLS) (Chlorobium tepidum).